A 560-amino-acid polypeptide reads, in one-letter code: Putative transport protein VFMJ11_0927 (560 aa).

A run of 5 helical transmembrane segments spans residues Leu8–Ala28, Leu37–Phe57, Phe66–Leu86, Leu94–Phe114, and Asn161–Ala181. RCK C-terminal domains lie at Arg203 to Gly292 and Lys293 to Phe376. 5 helical membrane passes run Leu386–Phe406, Val409–Leu429, Gly451–Phe471, Val478–Ala498, and Ala539–Leu559.

This sequence belongs to the AAE transporter (TC 2.A.81) family. YbjL subfamily.

It is found in the cell membrane. The protein is Putative transport protein VFMJ11_0927 of Aliivibrio fischeri (strain MJ11) (Vibrio fischeri).